The primary structure comprises 360 residues: Mannose-1-phosphate guanylyltransferase catalytic subunit beta (360 aa).

Residues 2–222 are substrate-binding domain; sequence KALILVGGYG…QGFWMDIGQP (221 aa). Residue Asp-110 participates in GDP-alpha-D-mannose binding. Asp-110 serves as a coordination point for Mg(2+). Lys-162 is a catalytic residue. Asp-218 lines the GDP-alpha-D-mannose pocket. Asp-218 lines the Mg(2+) pocket. The segment at 245–360 is hexapeptide repeat domain; that stretch reads CSGPGIVGNV…ESVPEPGIIM (116 aa).

The protein belongs to the transferase hexapeptide repeat family. As to quaternary structure, component of the GMPPA-GMPPB mannose-1-phosphate guanylyltransferase complex composed of 4 GMPPA subunits and 8 GMPPB subunits; the complex is organized into three layers, a central layer made up of 2 GMPPA dimers sandwiched between two layers each made up of 2 GMPPB dimers. GMPPB catalytic activity is reduced when part of the complex and binding of GDP-alpha-D-Mannose by GMPPA induces allosteric feedback inhibition of GMPPB. Mg(2+) serves as cofactor. Expressed in the liver (at protein level).

It is found in the cytoplasm. It catalyses the reaction alpha-D-mannose 1-phosphate + GTP + H(+) = GDP-alpha-D-mannose + diphosphate. Its pathway is nucleotide-sugar biosynthesis; GDP-alpha-D-mannose biosynthesis; GDP-alpha-D-mannose from alpha-D-mannose 1-phosphate (GTP route): step 1/1. Enzyme activity is reduced by incorporation into the GMPPA-GMPPB mannose-1-phosphate guanylyltransferase complex. Allosterically inhibited, when part of the GMPPA-GMPPB complex, by GDP-alpha-D-mannose binding to GMPPA. In terms of biological role, catalytic subunit of the GMPPA-GMPPB mannose-1-phosphate guanylyltransferase complex. Catalyzes the formation of GDP-mannose, an essential precursor of glycan moieties of glycoproteins and glycolipids. Can catalyze the reverse reaction in vitro. Together with GMPPA regulates GDP-alpha-D-mannose levels. This Sus scrofa (Pig) protein is Mannose-1-phosphate guanylyltransferase catalytic subunit beta.